We begin with the raw amino-acid sequence, 78 residues long: uncharacterized protein (78 aa).

This is an uncharacterized protein from Mycoplasma (Bacteriophage L2).